Consider the following 250-residue polypeptide: DNA repair protein RecO (250 aa).

This sequence belongs to the RecO family.

In terms of biological role, involved in DNA repair and RecF pathway recombination. This is DNA repair protein RecO from Rhodopseudomonas palustris (strain ATCC BAA-98 / CGA009).